Consider the following 585-residue polypeptide: Voltage-gated potassium channel KCNC1 (585 aa).

The Cytoplasmic segment spans residues 1 to 190 (MGQGDESERI…EDPYSSRYAR (190 aa)). The residue at position 44 (Ser-44) is a Phosphoserine. Zn(2+)-binding residues include His-77, Cys-83, Cys-104, and Cys-105. Residues 121 to 147 (SFGGAPLDNSADDADADGPGDSGDGED) are disordered. Phosphoserine is present on residues Ser-130, Ser-142, Ser-158, and Ser-160. The segment covering 130–147 (SADDADADGPGDSGDGED) has biased composition (acidic residues). The helical transmembrane segment at 191–209 (YVAFASLFFILVSITTFCL) threads the bilayer. N-linked (GlcNAc...) asparagine glycosylation is found at Asn-220 and Asn-229. A helical transmembrane segment spans residues 248–267 (IEGVCVVWFTFEFLMRVVFC). The Cytoplasmic segment spans residues 268 to 276 (PNKVEFIKN). A helical membrane pass occupies residues 277 to 295 (SLNIIDFVAILPFYLEVGL). The helical; Voltage-sensor transmembrane segment at 309–331 (FLRVVRFVRILRIFKLTRHFVGL) threads the bilayer. Residues 332–344 (RVLGHTLRASTNE) are Cytoplasmic-facing. Residues 345–366 (FLLLIIFLALGVLIFATMIYYA) traverse the membrane as a helical segment. K(+) is bound by residues Thr-400, Leu-401, Gly-402, and Tyr-403. The short motif at 400–405 (TLGYGD) is the Selectivity filter element. The helical transmembrane segment at 415 to 436 (LVGALCALAGVLTIAMPVPVIV) threads the bilayer. The Cytoplasmic segment spans residues 437–585 (NNFGMYYSLA…YMPTEAVRVT (149 aa)). Ser-474 is subject to Phosphoserine. Thr-483 is modified (phosphothreonine).

The protein belongs to the potassium channel family. C (Shaw) (TC 1.A.1.2) subfamily. Kv3.1/KCNC1 sub-subfamily. Homotetramer. Homomultimer. Heteromultimer with KCNG3, KCNG4 and KCNV2. Heteromultimer with KCNC2. Heterotetramer with KCNC3. Interacts with the ancillary subunits KCNE1 and KCNE2; the interaction modulates channel activity. In terms of processing, N-glycosylated; contains sialylated glycans. As to expression, expressed in brain. Expressed in globus pallidal neurons of the basal ganglia (at protein level). Detected on Purkinje cells in the cerebellum molecular layer (at protein level).

Its subcellular location is the cell membrane. The protein localises to the cell projection. It localises to the axon. It is found in the presynaptic cell membrane. The catalysed reaction is K(+)(in) = K(+)(out). Its function is as follows. Voltage-gated potassium channel that opens in response to the voltage difference across the membrane and through which potassium ions pass in accordance with their electrochemical gradient. The mechanism is time-dependent and inactivation is slow. Plays an important role in the rapid repolarization of fast-firing brain neurons. Can form functional homotetrameric channels and heterotetrameric channels that contain variable proportions of KCNC2, and possibly other family members as well. Contributes to fire sustained trains of very brief action potentials at high frequency in pallidal neurons. This is Voltage-gated potassium channel KCNC1 from Rattus norvegicus (Rat).